Here is a 101-residue protein sequence, read N- to C-terminus: Small ribosomal subunit protein uS14A (101 aa).

Basic and acidic residues-rich tracts occupy residues 28-44 (KETIRRPSSSEDERAEA) and 61-70 (RNRDAADGRP). Residues 28–74 (KETIRRPSSSEDERAEARAALQRLPRDASPVRLRNRDAADGRPRGHL) are disordered.

This sequence belongs to the universal ribosomal protein uS14 family. In terms of assembly, part of the 30S ribosomal subunit. Contacts proteins S3 and S10.

In terms of biological role, binds 16S rRNA, required for the assembly of 30S particles and may also be responsible for determining the conformation of the 16S rRNA at the A site. In Rhodococcus jostii (strain RHA1), this protein is Small ribosomal subunit protein uS14A.